The following is a 381-amino-acid chain: Queuine tRNA-ribosyltransferase (381 aa).

The Proton acceptor role is filled by Asp-92. Residues 92 to 96 (DSGGF), Asp-146, Gln-190, and Gly-217 each bind substrate. The RNA binding stretch occupies residues 248-254 (GVGRPED). Asp-267 (nucleophile) is an active-site residue. Residues 272–276 (TRNAR) are RNA binding; important for wobble base 34 recognition. The Zn(2+) site is built by Cys-305, Cys-307, Cys-310, and His-337.

The protein belongs to the queuine tRNA-ribosyltransferase family. Homodimer. Within each dimer, one monomer is responsible for RNA recognition and catalysis, while the other monomer binds to the replacement base PreQ1. The cofactor is Zn(2+).

The catalysed reaction is 7-aminomethyl-7-carbaguanine + guanosine(34) in tRNA = 7-aminomethyl-7-carbaguanosine(34) in tRNA + guanine. The protein operates within tRNA modification; tRNA-queuosine biosynthesis. In terms of biological role, catalyzes the base-exchange of a guanine (G) residue with the queuine precursor 7-aminomethyl-7-deazaguanine (PreQ1) at position 34 (anticodon wobble position) in tRNAs with GU(N) anticodons (tRNA-Asp, -Asn, -His and -Tyr). Catalysis occurs through a double-displacement mechanism. The nucleophile active site attacks the C1' of nucleotide 34 to detach the guanine base from the RNA, forming a covalent enzyme-RNA intermediate. The proton acceptor active site deprotonates the incoming PreQ1, allowing a nucleophilic attack on the C1' of the ribose to form the product. After dissociation, two additional enzymatic reactions on the tRNA convert PreQ1 to queuine (Q), resulting in the hypermodified nucleoside queuosine (7-(((4,5-cis-dihydroxy-2-cyclopenten-1-yl)amino)methyl)-7-deazaguanosine). The protein is Queuine tRNA-ribosyltransferase of Xanthomonas axonopodis pv. citri (strain 306).